Here is a 309-residue protein sequence, read N- to C-terminus: Serine/threonine-protein phosphatase 2A catalytic subunit beta isoform (309 aa).

Positions 57, 59, 85, and 117 each coordinate Mn(2+). The active-site Proton donor is His118. Residues His167 and His241 each contribute to the Mn(2+) site. Residue Tyr307 is modified to Phosphotyrosine. Leu309 carries the leucine methyl ester modification.

The protein belongs to the PPP phosphatase family. PP-1 subfamily. Found in a complex with at least ARL2, PPP2CB, PPP2R1A, PPP2R2A, PPP2R5E and TBCD. Interacts with TBCD. PP2A consists of a common heterodimeric core enzyme (composed of a 36 kDa catalytic subunit (subunit C) and a 65 kDa constant regulatory subunit (PR65) (subunit A)) that associates with a variety of regulatory subunits. Proteins that associate with the core dimer include three families of regulatory subunits B (the R2/B/PR55/B55, R3/B''/PR72/PR130/PR59 and R5/B'/B56 families), the 48 kDa variable regulatory subunit, viral proteins, and cell signaling molecules. Binds PPME1. May indirectly interact with SGO1, most probably through regulatory B56 subunits. Interacts with CTTNBP2NL. Interacts with PTPA. Part of the core of STRIPAK complexes composed of PP2A catalytic and scaffolding subunits, the striatins (PP2A regulatory subunits), the striatin-associated proteins MOB4, STRIP1 and STRIP2, PDCD10 and members of the STE20 kinases, such as STK24 and STK26. Mn(2+) is required as a cofactor. In terms of processing, reversibly methyl esterified on Leu-309 by leucine carboxyl methyltransferase 1 (Lcmt1) and protein phosphatase methylesterase 1 (PPME1). Carboxyl methylation influences the affinity of the catalytic subunit for the different regulatory subunits, thereby modulating the PP2A holoenzyme's substrate specificity, enzyme activity and cellular localization. Post-translationally, phosphorylation of either threonine (by autophosphorylation-activated protein kinase) or tyrosine results in inactivation of the phosphatase. Auto-dephosphorylation has been suggested as a mechanism for reactivation. May be monoubiquitinated by NOSIP.

It localises to the cytoplasm. The protein resides in the nucleus. Its subcellular location is the chromosome. The protein localises to the centromere. It is found in the cytoskeleton. It localises to the spindle pole. It carries out the reaction O-phospho-L-seryl-[protein] + H2O = L-seryl-[protein] + phosphate. The catalysed reaction is O-phospho-L-threonyl-[protein] + H2O = L-threonyl-[protein] + phosphate. Functionally, catalytic subunit of protein phosphatase 2A (PP2A), a serine/threonine phosphatase involved in the regulation of a wide variety of enzymes, signal transduction pathways, and cellular events. PP2A can modulate the activity of phosphorylase B kinase, casein kinase 2, mitogen-stimulated S6 kinase, and MAP-2 kinase. Part of the striatin-interacting phosphatase and kinase (STRIPAK) complexes. STRIPAK complexes have critical roles in protein (de)phosphorylation and are regulators of multiple signaling pathways including Hippo, MAPK, nuclear receptor and cytoskeleton remodeling. Different types of STRIPAK complexes are involved in a variety of biological processes such as cell growth, differentiation, apoptosis, metabolism and immune regulation. The polypeptide is Serine/threonine-protein phosphatase 2A catalytic subunit beta isoform (PPP2CB) (Oryctolagus cuniculus (Rabbit)).